The primary structure comprises 445 residues: UPF0210 protein Ccon26_06850 (445 aa).

The protein belongs to the UPF0210 family. As to quaternary structure, homodimer.

The protein is UPF0210 protein Ccon26_06850 of Campylobacter concisus (strain 13826).